Reading from the N-terminus, the 449-residue chain is Alpha-L-fucosidase (449 aa).

The first 19 residues, 1-19, serve as a signal peptide directing secretion; the sequence is MGLLLLLSLLSACFQPRYA. 4 N-linked (GlcNAc...) asparagine glycosylation sites follow: N156, N224, N362, and N375.

The protein belongs to the glycosyl hydrolase 29 family. As to quaternary structure, homotetramer.

The protein resides in the secreted. The catalysed reaction is an alpha-L-fucoside + H2O = L-fucose + an alcohol. Its function is as follows. Alpha-L-fucosidase is responsible for hydrolyzing the alpha-1,6-linked fucose joined to the reducing-end N-acetylglucosamine of the carbohydrate moieties of glycoproteins. In Branchiostoma floridae (Florida lancelet), this protein is Alpha-L-fucosidase.